The primary structure comprises 213 residues: Thymidylate kinase (213 aa).

An ATP-binding site is contributed by 10 to 17; the sequence is GIDGCGKT.

It belongs to the thymidylate kinase family.

The enzyme catalyses dTMP + ATP = dTDP + ADP. Its function is as follows. Phosphorylation of dTMP to form dTDP in both de novo and salvage pathways of dTTP synthesis. The protein is Thymidylate kinase of Synechococcus sp. (strain WH7803).